The primary structure comprises 531 residues: Muscarinic acetylcholine receptor M5 (531 aa).

Residues methionine 1–glutamate 28 lie on the Extracellular side of the membrane. Asparagine 7 carries an N-linked (GlcNAc...) asparagine glycan. Residues valine 29–isoleucine 52 form a helical membrane-spanning segment. Residues serine 53 to asparagine 65 lie on the Cytoplasmic side of the membrane. The chain crosses the membrane as a helical span at residues tyrosine 66–tyrosine 86. The Extracellular portion of the chain corresponds to threonine 87–aspartate 103. Cysteine 102 and cysteine 182 are joined by a disulfide. The helical transmembrane segment at leucine 104–phenylalanine 125 threads the bilayer. Residues aspartate 126 to arginine 145 lie on the Cytoplasmic side of the membrane. Residues alanine 146–tryptophan 168 form a helical membrane-spanning segment. Topologically, residues glutamine 169 to proline 190 are extracellular. The chain crosses the membrane as a helical span at residues threonine 191–cysteine 213. The Cytoplasmic segment spans residues arginine 214–threonine 442. 2 disordered regions span residues serine 259–lysine 295 and glutamate 327–valine 346. Positions glutamine 267 to threonine 287 are enriched in low complexity. The span at lysine 334 to valine 346 shows a compositional bias: polar residues. A helical membrane pass occupies residues leucine 443–valine 463. The Extracellular segment spans residues serine 464–histidine 477. A helical transmembrane segment spans residues leucine 478 to cysteine 497. The Cytoplasmic portion of the chain corresponds to asparagine 498–proline 531. Phosphothreonine occurs at positions 500 and 504.

Belongs to the G-protein coupled receptor 1 family. Muscarinic acetylcholine receptor subfamily. CHRM5 sub-subfamily.

It is found in the cell membrane. The protein localises to the postsynaptic cell membrane. The muscarinic acetylcholine receptor mediates various cellular responses, including inhibition of adenylate cyclase, breakdown of phosphoinositides and modulation of potassium channels through the action of G proteins. Primary transducing effect is Pi turnover. This is Muscarinic acetylcholine receptor M5 (Chrm5) from Rattus norvegicus (Rat).